Reading from the N-terminus, the 77-residue chain is Small ribosomal subunit protein bS21 (77 aa).

Basic and acidic residues predominate over residues 38–52 (KPSEKRAREKAEAIR). Residues 38–77 (KPSEKRAREKAEAIRRTRKLARKRAQREGIVSNGRTASVR) are disordered. Residues 53-62 (RTRKLARKRA) show a composition bias toward basic residues.

It belongs to the bacterial ribosomal protein bS21 family.

This Bartonella bacilliformis (strain ATCC 35685 / KC583 / Herrer 020/F12,63) protein is Small ribosomal subunit protein bS21.